The sequence spans 457 residues: Cysteine desulfurase (457 aa).

5 residues coordinate pyridoxal 5'-phosphate: Ala127, Thr128, Gln235, Ser255, and His257. At Lys258 the chain carries N6-(pyridoxal phosphate)lysine. Residue Thr295 participates in pyridoxal 5'-phosphate binding. Cys381 serves as the catalytic Cysteine persulfide intermediate. [2Fe-2S] cluster is bound at residue Cys381. A Zn(2+)-binding site is contributed by Cys381. Cys381 is modified (cysteine persulfide).

This sequence belongs to the class-V pyridoxal-phosphate-dependent aminotransferase family. NifS/IscS subfamily. Homodimer. Component of the mitochondrial core iron-sulfur cluster (ISC) complex composed of NFS1, LYRM4, NDUFAB1, ISCU, FXN, and FDX2; this complex is a heterohexamer containing two copies of each monomer. Component of cyteine desulfurase complex composed of NFS1, LYRM4 and NDUFAB1; this complex contributes to the activation of cysteine desulfurase activity and NFS1 stabilization. Interacts (homodimer form) with ISCU (D-state); each monomer interacts with the C-terminal regions of each NFS1 monomer. Interacts with HSPA9. Interacts (via homodimer form) with FDX2. Interacts (via homodimer form) with FXN. Interacts with LYRM4. Component of a complex composed of FXN, NFS1, LYRM4 and ISCU. As to quaternary structure, monomer. Homodimer. Oligomer. Interacts with ISCU. Component of the cysteine desulfurase complex composed of NFS1 and LYRM4; this complex contributes to the activation of cysteine desulfurase activity. Interacts with MOCS3. Pyridoxal 5'-phosphate is required as a cofactor. In terms of processing, N-gluconoylated. Cysteine persulfide intermediate is reduced by thiol-containing molecules like glutathione and L-cysteine. Persulfide reduction is a rate-limiting step of cysteine desulfurase catalytic cycle.

It localises to the mitochondrion. Its subcellular location is the cytoplasm. The protein localises to the nucleus. It is found in the cytoskeleton. The protein resides in the microtubule organizing center. It localises to the centrosome. It carries out the reaction (sulfur carrier)-H + L-cysteine = (sulfur carrier)-SH + L-alanine. It catalyses the reaction L-cysteinyl-[cysteine desulfurase] + L-cysteine = S-sulfanyl-L-cysteinyl-[cysteine desulfurase] + L-alanine. Its activity is regulated as follows. Active only in complex with LYRM4. Cysteine desulfurase, of the core iron-sulfur cluster (ISC) assembly complex, that catalyzes the desulfuration of L-cysteine to L-alanine, as component of the cysteine desulfurase complex leading to the formation of a cysteine persulfide intermediate at the active site cysteine residue and participates in the [2Fe-2S] clusters assembly on the scaffolding protein ISCU. The persulfide is then transferred on the flexible Cys loop from the catalytic site of NFS1 to the surface of NFS1. After the NFS1-linked persulfide sulfur is transferred to one of the conserved Cys residues of the scaffold, a reaction assisted by FXN. The core iron-sulfur cluster (ISC) assembly complex is involved in the de novo synthesis of a [2Fe-2S] cluster, the first step of the mitochondrial iron-sulfur protein biogenesis. This process is initiated by the cysteine desulfurase complex (NFS1:LYRM4:NDUFAB1) that produces persulfide which is delivered on the scaffold protein ISCU in a FXN-dependent manner. Then this complex is stabilized by FDX2 which provides reducing equivalents to accomplish the [2Fe-2S] cluster assembly. Finally, the [2Fe-2S] cluster is transferred from ISCU to chaperone proteins, including HSCB, HSPA9 and GLRX5. Functionally, may catalyze the desulfuration of L-cysteine to L-alanine as component of the cysteine desulfurase complex (NFS1:LYRM4), leading to the formation of a cysteine persulfide intermediate. Acts as a sulfur donor for MOCS3 by transferring the sulfur of the cysteine persulfide intermediate on MOCS3. The polypeptide is Cysteine desulfurase (Pongo abelii (Sumatran orangutan)).